A 673-amino-acid polypeptide reads, in one-letter code: Mechanosensitive ion channel protein 2, chloroplastic (673 aa).

Residues 1–75 constitute a chloroplast transit peptide; that stretch reads MALYGTLQLS…SVPCRTTAFR (75 aa). Helical transmembrane passes span 107–127, 152–172, 193–213, 240–260, and 264–284; these read FPFV…LWGL, YHVM…LFIC, LNFV…SSLI, ALYS…LGFS, and WLTA…EILT. Positions 492-673 are disordered; it reads KINGEDKSKS…QPNSGASTEP (182 aa). Basic and acidic residues-rich tracts occupy residues 510-525, 564-576, and 617-642; these read AEQE…KETS, TPKD…TEKP, and GSKR…ELTG. Phosphoserine is present on Ser571. Polar residues predominate over residues 661–673; it reads SQSQPNSGASTEP.

It belongs to the MscS (TC 1.A.23) family. As to expression, widely expressed.

It is found in the plastid. The protein localises to the chloroplast membrane. Mechanosensitive channel that opens in response to stretch forces in the membrane lipid bilayer. Controls plastid size, shape, and perhaps division during normal plant development by altering ion flux in response to changes in membrane tension. Acts as a component of the chloroplast division machinery. In Arabidopsis thaliana (Mouse-ear cress), this protein is Mechanosensitive ion channel protein 2, chloroplastic (MSL2).